We begin with the raw amino-acid sequence, 239 residues long: Aldehyde dehydrogenase, dimeric NADP-preferring (239 aa).

Residue Cys-30 is part of the active site.

Belongs to the aldehyde dehydrogenase family. In terms of assembly, homodimer.

The protein resides in the cytoplasm. It catalyses the reaction an aldehyde + NAD(+) + H2O = a carboxylate + NADH + 2 H(+). The enzyme catalyses octanal + NAD(+) + H2O = octanoate + NADH + 2 H(+). In terms of biological role, ALDHs play a major role in the detoxification of alcohol-derived acetaldehyde. They are involved in the metabolism of corticosteroids, biogenic amines, neurotransmitters, and lipid peroxidation. Oxidizes medium and long chain aldehydes into non-toxic fatty acids. Preferentially oxidizes aromatic aldehyde substrates. Comprises about 50 percent of corneal epithelial soluble proteins. May play a role in preventing corneal damage caused by ultraviolet light. The polypeptide is Aldehyde dehydrogenase, dimeric NADP-preferring (ALDH3A1) (Bos taurus (Bovine)).